A 53-amino-acid chain; its full sequence is UPF0391 membrane protein GFO_1615 (53 aa).

Transmembrane regions (helical) follow at residues 4-24 (LIVI…GGVA) and 27-47 (AADI…ISVL).

The protein belongs to the UPF0391 family.

It localises to the cell membrane. This is UPF0391 membrane protein GFO_1615 from Christiangramia forsetii (strain DSM 17595 / CGMCC 1.15422 / KT0803) (Gramella forsetii).